The primary structure comprises 1310 residues: Rho family-interacting cell polarization regulator 2 (1310 aa).

A phosphoserine mark is found at Ser123 and Ser178. The involved in cell filopodia formation stretch occupies residues 196-254; the sequence is MHNLGHKNTNTPKEPQPKRVEEVYRALKNGLDEYLEFHQTELDKLTAQLKDMKRNSRLG. Residues 224–253 adopt a coiled-coil conformation; the sequence is NGLDEYLEFHQTELDKLTAQLKDMKRNSRL. Phosphoserine is present on Ser508. The span at 588–608 shows a compositional bias: polar residues; sequence SSLSSQNEGTEDSSSASSRNS. Residues 588-639 form a disordered region; it reads SSLSSQNEGTEDSSSASSRNSLGEDHEPKSHSKSDTVEPKKPSVDARSGTES. Over residues 609 to 631 the composition is skewed to basic and acidic residues; sequence LGEDHEPKSHSKSDTVEPKKPSV. Residue Ser682 is modified to Phosphoserine.

Belongs to the RIPOR family. Homooligomer; homooligomerization is regulated by RHOC and leads to the formation of concatemers through the association of N- and C-termini. Interacts (phosphorylated form) with 14-3-3 proteins; these interactions occur during myogenic cell differentiation and also induces T cell proliferation arrest. Interacts (phosphorylated form) with HDAC6; this interaction occurs during early myogenic differentiation, prevents HDAC6 to deacetylate tubulin and also induces T cell proliferation arrest. Interacts with DYSF; this interaction occurs during early myogenic differentiation. Interacts with MYOF. Interacts (via active GTP- or inactive GDP-bound forms) with RHOA; this interaction is direct, blocks the loading of GTP to RHOA and decreases upon chemokine CCL19 stimulation in primary T lymphocytes. Interacts with RHOC. Interacts (via phosphorylated form) with YWHAB; this interaction occurs in a chemokine-dependent manner and does not compete for binding of RIPOR2 with RHOA nor blocks inhibition of RIPOR2-mediated RHOA activity. Interacts with YWHAE. Interacts with YWHAQ. Phosphorylated. Chemokine-induced phosphorylation in neutrophils occurs in a PKC- and AKT-dependent manner, resulting in RIPOR2 interaction with YWHAB and stabilization. Phosphorylated by PKCA, AKT1 and MAPKAPK1A; in vitro. In terms of tissue distribution, expressed in the cochlea (at protein level).

Its subcellular location is the cytoplasm. The protein resides in the cytoskeleton. The protein localises to the cell projection. It localises to the filopodium. It is found in the apical cell membrane. Its subcellular location is the stereocilium. The protein resides in the stereocilium membrane. Functionally, acts as an inhibitor of the small GTPase RHOA and plays several roles in the regulation of myoblast and hair cell differentiation, lymphocyte T proliferation and neutrophil polarization. Plays a role in fetal mononuclear myoblast differentiation by promoting filopodia and myotube formation. Maintains naive T lymphocytes in a quiescent state and prevents chemokine-induced T lymphocyte responses, such as cell adhesion, polarization and migration. Involved also in the regulation of neutrophil polarization, chemotaxis and adhesion. Required for normal development of inner and outer hair cell stereocilia within the cochlea of the inner ear. Plays a role for maintaining the structural organization of the basal domain of stereocilia. Involved in mechanosensory hair cell function. Required for normal hearing. This chain is Rho family-interacting cell polarization regulator 2, found in Rattus norvegicus (Rat).